Consider the following 694-residue polypeptide: Methionine--tRNA ligase (694 aa).

Residues 12 to 22 (PYANGPLHLGH) carry the 'HIGH' region motif. Zn(2+) contacts are provided by cysteine 143, cysteine 146, cysteine 156, and cysteine 159. Residues 330-334 (KMSKS) carry the 'KMSKS' region motif. ATP is bound at residue lysine 333. Residues 552-577 (APAAPAATTKPAPSKADAAPAAVANP) are disordered. The tRNA-binding domain maps to 591–694 (DFAKLDLRIG…AGAQPGMPVR (104 aa)).

This sequence belongs to the class-I aminoacyl-tRNA synthetase family. MetG type 1 subfamily. Homodimer. The cofactor is Zn(2+).

The protein localises to the cytoplasm. The catalysed reaction is tRNA(Met) + L-methionine + ATP = L-methionyl-tRNA(Met) + AMP + diphosphate. In terms of biological role, is required not only for elongation of protein synthesis but also for the initiation of all mRNA translation through initiator tRNA(fMet) aminoacylation. The protein is Methionine--tRNA ligase of Xanthomonas campestris pv. campestris (strain B100).